The chain runs to 816 residues: Phosphatidylinositol 4-kinase beta (816 aa).

The interval 1 to 30 (MGDTVVEPAPLKPTSEPTSGPPGNNGGSLL) is disordered. Gly-2 carries the N-acetylglycine modification. In terms of domain architecture, PIK helical spans 29–242 (LLSVITEGVG…GTKLRKLILS (214 aa)). The interaction with ACBD3 stretch occupies residues 41-67 (SVIDPEVAQKACQEVLEKVKLLHGGVA). Disordered regions lie at residues 101 to 120 (EDEMGAAVASGTAKGARRRR) and 248 to 318 (AHRK…SFSS). Ser-258 carries the phosphoserine modification. Phosphothreonine is present on Thr-263. Ser-266, Ser-275, Ser-277, Ser-284, and Ser-294 each carry phosphoserine. Composition is skewed to polar residues over residues 278-297 (DATASISLSSNLKRTASNPK) and 306-318 (SSSTESIDNSFSS). Ser-428 is subject to Phosphoserine. Thr-438 is modified (phosphothreonine). Residue Ser-511 is modified to Phosphoserine. Residues Thr-517 and Thr-519 each carry the phosphothreonine modification. In terms of domain architecture, PI3K/PI4K catalytic spans 535 to 801 (EPWQEKVRRI…MVDGSMRSIT (267 aa)). The interval 541–547 (VRRIREG) is G-loop. The interval 668–676 (QVKDRHNGN) is catalytic loop. Residues 687–711 (HIDFGFILSSSPRNLGFETSAFKLT) are activation loop.

Belongs to the PI3/PI4-kinase family. Type III PI4K subfamily. Interacts with ARF1 and ARF3 in the Golgi complex, but not with ARF4, ARF5 or ARF6. Interacts with NCS1/FREQ in a calcium-independent manner. Interacts with CALN1/CABP8 and CALN2/CABP7; in a calcium-dependent manner; this interaction competes with NCS1/FREQ binding. Interacts with ACBD3. Interacts with ARMH3, YWHAB, YWHAE, YWHAG, YWHAH, YWHAQ, YWHAZ and SFN. Interacts with GGA2 (via VHS domain); the interaction is important for PI4KB location at the Golgi apparatus membrane. Interacts with ATG9A. In terms of assembly, (Microbial infection) Interacts with Aichi virus protein 3A. Part of a complex Aichi virus protein 3A/ACBD3/PI4KB that allows the synthesis of PI4P at the viral RNA replication sites. Mg(2+) is required as a cofactor. Requires Mn(2+) as cofactor. In terms of tissue distribution, widely expressed with highest levels in heart, skeletal muscle, pancreas, testis and ovary. Weakly expressed in liver. Expressed in the innear ear in the epithelium of the spinal organ of corti.

The protein localises to the endomembrane system. It localises to the mitochondrion outer membrane. Its subcellular location is the rough endoplasmic reticulum membrane. It is found in the golgi apparatus. The protein resides in the golgi apparatus membrane. The protein localises to the cytoplasm. It localises to the perinuclear region. The catalysed reaction is a 1,2-diacyl-sn-glycero-3-phospho-(1D-myo-inositol) + ATP = a 1,2-diacyl-sn-glycero-3-phospho-(1D-myo-inositol 4-phosphate) + ADP + H(+). Its activity is regulated as follows. Inhibited by wortmannin and adenosine. Increased kinase activity upon interaction with NCS1/FREQ. (Microbial infection) Activated by Aichi virus protein 3A, this activation is sensitized by ACBD3. Phosphorylates phosphatidylinositol (PI) in the first committed step in the production of the second messenger inositol-1,4,5,-trisphosphate (PIP). May regulate Golgi disintegration/reorganization during mitosis, possibly via its phosphorylation. Involved in Golgi-to-plasma membrane trafficking. May play an important role in the inner ear development. Functionally, (Microbial infection) Plays an essential role in Aichi virus RNA replication. Recruited by ACBD3 at the viral replication sites. Its function is as follows. (Microbial infection) Required for cellular spike-mediated entry of human coronavirus SARS-CoV. The sequence is that of Phosphatidylinositol 4-kinase beta from Homo sapiens (Human).